The chain runs to 78 residues: Large ribosomal subunit protein bL28 (78 aa).

The segment at 1-23 (MSRVCQVSGKRVQTGNNVSHANN) is disordered. Residues 11 to 22 (RVQTGNNVSHAN) are compositionally biased toward polar residues.

The protein belongs to the bacterial ribosomal protein bL28 family.

The polypeptide is Large ribosomal subunit protein bL28 (Stenotrophomonas maltophilia (strain R551-3)).